We begin with the raw amino-acid sequence, 317 residues long: Ribose-phosphate pyrophosphokinase (317 aa).

ATP is bound by residues 43 to 45 (DGE) and 102 to 103 (RQ). Residues K106 and R110 each coordinate ADP. H136 serves as a coordination point for Mg(2+). Residues Q141 and 149 to 150 (DH) each bind ADP. Position 175 (D175) interacts with Mg(2+). K198 is an active-site residue. Residues R200, D224, and 228–232 (DTAGT) contribute to the D-ribose 5-phosphate site. 311 to 313 (SVS) is an ADP binding site.

It belongs to the ribose-phosphate pyrophosphokinase family. Class I subfamily. As to quaternary structure, homohexamer; trimer of dimers. Requires Mg(2+) as cofactor.

It is found in the cytoplasm. It carries out the reaction D-ribose 5-phosphate + ATP = 5-phospho-alpha-D-ribose 1-diphosphate + AMP + H(+). The protein operates within metabolic intermediate biosynthesis; 5-phospho-alpha-D-ribose 1-diphosphate biosynthesis; 5-phospho-alpha-D-ribose 1-diphosphate from D-ribose 5-phosphate (route I): step 1/1. Its activity is regulated as follows. Activated by inorganic phosphate, and to a lesser extent by sulfate ions. In addition to form a complex with ATP, Mg(2+) also acts as a cofactor. Strongly inhibited by ADP through competitive binding at the activation site and at a specific allosteric site. Less strongly inhibited by alpha,beta-methylene ATP (mADP), AMP, GDP, GMP and UTP. Functionally, involved in the biosynthesis of the central metabolite phospho-alpha-D-ribosyl-1-pyrophosphate (PRPP) via the transfer of pyrophosphoryl group from ATP to 1-hydroxyl of ribose-5-phosphate (Rib-5-P). This chain is Ribose-phosphate pyrophosphokinase, found in Bacillus subtilis (strain 168).